The primary structure comprises 330 residues: Glycerol-3-phosphate dehydrogenase [NAD(P)+] (330 aa).

Residues Ser10, Trp11, Arg31, and Lys105 each coordinate NADPH. Positions 105, 135, and 137 each coordinate sn-glycerol 3-phosphate. Ala139 is an NADPH binding site. Residues Lys190, Asp243, Ser253, Arg254, and Asn255 each contribute to the sn-glycerol 3-phosphate site. The active-site Proton acceptor is the Lys190. Arg254 is a binding site for NADPH. Val278 and Glu280 together coordinate NADPH.

The protein belongs to the NAD-dependent glycerol-3-phosphate dehydrogenase family.

The protein localises to the cytoplasm. The catalysed reaction is sn-glycerol 3-phosphate + NAD(+) = dihydroxyacetone phosphate + NADH + H(+). The enzyme catalyses sn-glycerol 3-phosphate + NADP(+) = dihydroxyacetone phosphate + NADPH + H(+). It participates in membrane lipid metabolism; glycerophospholipid metabolism. Functionally, catalyzes the reduction of the glycolytic intermediate dihydroxyacetone phosphate (DHAP) to sn-glycerol 3-phosphate (G3P), the key precursor for phospholipid synthesis. This Oleidesulfovibrio alaskensis (strain ATCC BAA-1058 / DSM 17464 / G20) (Desulfovibrio alaskensis) protein is Glycerol-3-phosphate dehydrogenase [NAD(P)+].